We begin with the raw amino-acid sequence, 509 residues long: Cytochrome P450 monooxygenase ORF9 (509 aa).

2 helical membrane-spanning segments follow: residues 20 to 40 and 309 to 329; these read IYVL…GLIV and LIIA…YYLL. Asn-353 is a glycosylation site (N-linked (GlcNAc...) asparagine). Residue Cys-448 participates in heme binding.

It belongs to the cytochrome P450 family. It depends on heme as a cofactor.

The protein localises to the membrane. The protein operates within sesquiterpene biosynthesis. Cytochrome P450 monooxygenase; part of the gene cluster that mediates the biosynthesis of PR-toxin, a bicyclic sesquiterpene belonging to the eremophilane class and acting as a mycotoxin. The first step of the pathway is catalyzed by the aristolochene synthase which performs the cyclization of trans,trans-farnesyl diphosphate (FPP) to the bicyclic sesquiterpene aristolochene. Following the formation of aristolochene, the non-oxygenated aristolochene is converted to the trioxygenated intermediate eremofortin B, via 7-epi-neopetasone. This conversion appears to involve three enzymes, a hydroxysterol oxidase-like enzyme, the quinone-oxidase prx3 that forms the quinone-type-structure in the bicyclic nucleus of aristolochene with the C8-oxo group and the C-3 hydroxyl group, and the P450 monooxygenase ORF6 that introduces the epoxide at the double bond between carbons 1 and 2. No monoxy or dioxy-intermediates have been reported to be released to the broth, so these three early oxidative reactions may be coupled together. Eremofortin B is further oxidized by another P450 monooxygenase, that introduces a second epoxide between carbons 7 and 11 prior to acetylation to eremofortin A by the acetyltransferase ORF8. The second epoxidation may be performed by a second P450 monooxygenase. After the acetylation step, eremofortin A is converted to eremofortin C and then to PR-toxin. First the conversion of eremofortin A to eremofortin C proceeds by oxidation of the side chain of the molecule at C-12 and is catalyzed by the short-chain oxidoreductase prx1. The cytochrome P450 monooxygenase ORF6 is probably also involved in this step. The primary alcohol formed at C-12 is finally oxidized by the short-chain alcohol dehydrogenase prx4 that forms PR-toxin. This Penicillium roqueforti (strain FM164) protein is Cytochrome P450 monooxygenase ORF9.